The primary structure comprises 347 residues: Protein YIPF3 (347 aa).

Residues 1-28 (MATQAAPASGVRNGAGPEWGGFEENIQG) form a disordered region. Residue alanine 2 is modified to N-acetylalanine. The Cytoplasmic portion of the chain corresponds to 2–145 (ATQAAPASGV…PIKMVNFPQK (144 aa)). A helical membrane pass occupies residues 146-166 (VAGELYGPLMLVFTLVAILLH). Over 167-184 (GMKTSDTIIREGTLMGTA) the chain is Lumenal. A helical transmembrane segment spans residues 185–205 (IGTCFGYWLGVSSFIYFLAYL). Residues 206-211 (CNAQIT) lie on the Cytoplasmic side of the membrane. Residues 212 to 234 (MLQMLALLGYGLFGHCIVLFITY) traverse the membrane as a helical segment. The Lumenal segment spans residues 235-237 (NIH). A helical membrane pass occupies residues 238–260 (LHALFYLFWLLLGGLSTLRMVAV). Residues 261–271 (LVSRTVGPTQR) lie on the Cytoplasmic side of the membrane. Residues 272-292 (LLLCGTLAALHMLFLLYLHFA) traverse the membrane as a helical segment. Over 293–347 (YHKVVEGILDTLEGPNIPPMQRVPRDIPAVLPAAKLPVAVVNATAKAIAVTLQSH) the chain is Lumenal. A glycan (N-linked (GlcNAc...) asparagine) is linked at asparagine 334.

The protein belongs to the YIP1 family. As to quaternary structure, interacts with YIPF4 and YIPF5.

It is found in the cell membrane. The protein resides in the golgi apparatus. It localises to the cis-Golgi network membrane. The protein localises to the cytoplasm. Its function is as follows. Involved in the maintenance of the Golgi structure. May play a role in hematopoiesis. This is Protein YIPF3 (Yipf3) from Rattus norvegicus (Rat).